The sequence spans 141 residues: Hemoglobin subunit beta (141 aa).

Positions histidine 2–histidine 141 constitute a Globin domain. 2 residues coordinate heme b: histidine 58 and histidine 87.

The protein belongs to the globin family. Heterotetramer of two alpha chains and two beta chains. Red blood cells.

Involved in oxygen transport from the lung to the various peripheral tissues. This chain is Hemoglobin subunit beta (HBB), found in Heterodontus portusjacksoni (Port Jackson shark).